Reading from the N-terminus, the 167-residue chain is G/U mismatch-specific DNA glycosylase (167 aa).

This sequence belongs to the uracil-DNA glycosylase (UDG) superfamily. TDG/mug family. Binds DNA as a monomer.

The protein localises to the cytoplasm. It catalyses the reaction Specifically hydrolyzes mismatched double-stranded DNA and polynucleotides, releasing free uracil.. In terms of biological role, excises ethenocytosine and uracil, which can arise by alkylation or deamination of cytosine, respectively, from the corresponding mispairs with guanine in ds-DNA. It is capable of hydrolyzing the carbon-nitrogen bond between the sugar-phosphate backbone of the DNA and the mispaired base. The complementary strand guanine functions in substrate recognition. Required for DNA damage lesion repair in stationary-phase cells. This Pectobacterium atrosepticum (strain SCRI 1043 / ATCC BAA-672) (Erwinia carotovora subsp. atroseptica) protein is G/U mismatch-specific DNA glycosylase.